A 619-amino-acid chain; its full sequence is Eukaryotic translation initiation factor 3 subunit D (619 aa).

Residues 99–160 (QKQPHQRGRF…KWGARPPPKI (62 aa)) form a disordered region. The segment covering 100–121 (KQPHQRGRFRGNLRNQRGRGRG) has biased composition (basic residues). The RNA gate stretch occupies residues 288–302 (EFDLLTVNETAIEPP). Residues 588–619 (TPAATETVATATTEATTPTTATKTTAPAAAQK) form a disordered region.

It belongs to the eIF-3 subunit D family. In terms of assembly, component of the eukaryotic translation initiation factor 3 (eIF-3) complex.

The protein resides in the cytoplasm. Its function is as follows. mRNA cap-binding component of the eukaryotic translation initiation factor 3 (eIF-3) complex, which is involved in protein synthesis of a specialized repertoire of mRNAs and, together with other initiation factors, stimulates binding of mRNA and methionyl-tRNAi to the 40S ribosome. The eIF-3 complex specifically targets and initiates translation of a subset of mRNAs involved in cell proliferation. In the eIF-3 complex, eif3d specifically recognizes and binds the 7-methylguanosine cap of a subset of mRNAs. In Aedes aegypti (Yellowfever mosquito), this protein is Eukaryotic translation initiation factor 3 subunit D.